The primary structure comprises 816 residues: H(+)/Cl(-) exchange transporter 5 (816 aa).

The segment at 1–26 (MAMWQGAMDNRGFQQGSFSSFQNSSS) is disordered. At 1–124 (MAMWQGAMDN…WALIHSVSDA (124 aa)) the chain is on the cytoplasmic side. The span at 12–25 (GFQQGSFSSFQNSS) shows a compositional bias: low complexity. 2 helical membrane-spanning segments follow: residues 125 to 162 (FSGW…ICTG) and 208 to 231 (VNYF…VKVF). A Selectivity filter part_1 motif is present at residues 237 to 241 (GSGIP). S238 is a chloride binding site. The helical intramembrane region spans 240–247 (IPEIKTIL). Transmembrane regions (helical) follow at residues 256 to 275 (LGKW…VSSG) and 281 to 300 (EGPL…HCFN). A Selectivity filter part_2 motif is present at residues 279–283 (GKEGP). 2 intramembrane regions (helical) span residues 312-324 (VLSA…VSVA) and 328-336 (PIGGVLFSL). Transmembrane regions (helical) follow at residues 348–366 (LWRS…RSIN), 389–415 (LVPF…AWCR), 422–442 (LGKY…ILAF), 498–518 (MWQL…TFGM), and 523–542 (GLFI…LGVG). Positions 523 to 527 (GLFIP) match the Selectivity filter part_3 motif. F525 lines the chloride pocket. An intramembrane region (helical) is located at residues 570-584 (GLYAMVGAAACLGGV). Residues 585–587 (TRM) constitute an intramembrane region (note=Loop between two helices). Residues 588–599 (TVSLVVIMFELT) constitute an intramembrane region (helical). Positions 600-604 (GGLEY) form an intramembrane region, note=Loop between two helices. Residues 605–622 (IVPLMAAAMTSKWVADAL) form a helical membrane-spanning segment. At 623–816 (GREGIYDAHI…NQDPDSILFN (194 aa)) the chain is on the cytoplasmic side. Y628 contacts chloride. CBS domains are found at residues 656 to 720 (MKPR…ARKK) and 752 to 812 (ILDL…DPDS). ATP-binding positions include T666, 687–689 (YSG), and 794–797 (TKKD).

This sequence belongs to the chloride channel (TC 2.A.49) family. ClC-5/CLCN5 subfamily. In terms of assembly, interacts with NEDD4 and NEDD4L. In terms of processing, ubiquitinated by NEDD4L in the presence of albumin; which promotes endocytosis and proteasomal degradation. As to expression, kidney. Moderately expressed in aortic vascular smooth muscle and endothelial cells, and at a slightly higher level in the coronary vascular smooth muscle.

The protein resides in the golgi apparatus membrane. It is found in the endosome membrane. Its subcellular location is the cell membrane. The catalysed reaction is 2 chloride(in) + H(+)(out) = 2 chloride(out) + H(+)(in). Functionally, proton-coupled chloride transporter. Functions as antiport system and exchanges chloride ions against protons. Important for normal acidification of the endosome lumen. May play an important role in renal tubular function. The CLC channel family contains both chloride channels and proton-coupled anion transporters that exchange chloride or another anion for protons. The absence of conserved gating glutamate residues is typical for family members that function as channels. In Homo sapiens (Human), this protein is H(+)/Cl(-) exchange transporter 5.